The chain runs to 367 residues: Aminomethyltransferase (367 aa).

It belongs to the GcvT family. As to quaternary structure, the glycine cleavage system is composed of four proteins: P, T, L and H.

The catalysed reaction is N(6)-[(R)-S(8)-aminomethyldihydrolipoyl]-L-lysyl-[protein] + (6S)-5,6,7,8-tetrahydrofolate = N(6)-[(R)-dihydrolipoyl]-L-lysyl-[protein] + (6R)-5,10-methylene-5,6,7,8-tetrahydrofolate + NH4(+). Its function is as follows. The glycine cleavage system catalyzes the degradation of glycine. The sequence is that of Aminomethyltransferase from Lysinibacillus sphaericus (strain C3-41).